Reading from the N-terminus, the 360-residue chain is 3-dehydroquinate synthase (360 aa).

NAD(+) contacts are provided by residues 105-109 (GVVGD), 129-130 (TT), Lys-142, Lys-151, and 169-172 (TLKT). Positions 184, 247, and 263 each coordinate Zn(2+).

This sequence belongs to the sugar phosphate cyclases superfamily. Dehydroquinate synthase family. Co(2+) is required as a cofactor. It depends on Zn(2+) as a cofactor. Requires NAD(+) as cofactor.

The protein resides in the cytoplasm. The enzyme catalyses 7-phospho-2-dehydro-3-deoxy-D-arabino-heptonate = 3-dehydroquinate + phosphate. The protein operates within metabolic intermediate biosynthesis; chorismate biosynthesis; chorismate from D-erythrose 4-phosphate and phosphoenolpyruvate: step 2/7. Functionally, catalyzes the conversion of 3-deoxy-D-arabino-heptulosonate 7-phosphate (DAHP) to dehydroquinate (DHQ). The polypeptide is 3-dehydroquinate synthase (Acetivibrio thermocellus (strain ATCC 27405 / DSM 1237 / JCM 9322 / NBRC 103400 / NCIMB 10682 / NRRL B-4536 / VPI 7372) (Clostridium thermocellum)).